The primary structure comprises 255 residues: MIRQVIQRISNPEASIESLQERRFWLQCERAYTWQPIYQTCGRLMAVELLTVVTHPLNPSQRLPPDRYFTEITVSHRMEVVKEQIDLLAQKADFFIEHGLLASVNIDGPTLIALRQQPKILRQIERLPWLRFELVEHIRLPKDSTFASMCEFGPLWLDDFGTGMANFSALSEVRYDYIKIARELFVMLRQSPEGRTLFSQLLHLMNRYCRGVIVEGVETPEEWRDVQNSPAFAAQGWFLSRPAPIETLNTAVLAL.

The EAL domain maps to 13–255 (EASIESLQER…ETLNTAVLAL (243 aa)).

It catalyses the reaction 3',3'-c-di-GMP + H2O = 5'-phosphoguanylyl(3'-&gt;5')guanosine + H(+). Functionally, involved in the control of the switch from cell motility to adhesion via regulation of cellular levels of cyclic-di-GMP (c-di-GMP). Part of a signaling cascade that regulates curli biosynthesis. The cascade is composed of two c-di-GMP control modules, in which c-di-GMP controlled by the DgcE/PdeH pair (module I) regulates the activity of the DgcM/PdeR pair (module II), which in turn regulates activity of the transcription factor MlrA and expression of the master biofilm regulator csgD. Effect on flagella is controlled via the c-di-GMP-binding flagellar brake protein YcgR. This Escherichia coli (strain K12) protein is Cyclic di-GMP phosphodiesterase PdeH.